Consider the following 258-residue polypeptide: SLA class II histocompatibility antigen, DQ haplotype D beta chain (258 aa).

Residues Met1–Asp31 form the signal peptide. Residues Ser32–Arg123 form a beta-1 region. Over Ser32–Lys227 the chain is Extracellular. Cystine bridges form between Cys44–Cys108 and Cys146–Cys202. Asn48 is a glycosylation site (N-linked (GlcNAc...) asparagine). Residues Val124 to Trp217 form a beta-2 region. One can recognise an Ig-like C1-type domain in the interval Pro126–Ser230. Residues Arg218–Lys227 form a connecting peptide region. Residues Met228–Ile248 traverse the membrane as a helical segment. Over Arg249–Arg258 the chain is Cytoplasmic.

This sequence belongs to the MHC class II family.

Its subcellular location is the membrane. The chain is SLA class II histocompatibility antigen, DQ haplotype D beta chain from Sus scrofa (Pig).